The following is a 341-amino-acid chain: Protein-glutamate methylesterase/protein-glutamine glutaminase 1 (341 aa).

A Response regulatory domain is found at 2–119 (KVGIVNDSAL…SDAKLTAGPL (118 aa)). D53 is subject to 4-aspartylphosphate. In terms of domain architecture, CheB-type methylesterase spans 146–331 (TLAASRLVAI…LTAIAPRLVQ (186 aa)). Residues S158, H185, and D278 contribute to the active site.

This sequence belongs to the CheB family. Phosphorylated by CheA. Phosphorylation of the N-terminal regulatory domain activates the methylesterase activity.

The protein localises to the cytoplasm. The catalysed reaction is [protein]-L-glutamate 5-O-methyl ester + H2O = L-glutamyl-[protein] + methanol + H(+). It catalyses the reaction L-glutaminyl-[protein] + H2O = L-glutamyl-[protein] + NH4(+). Functionally, involved in chemotaxis. Part of a chemotaxis signal transduction system that modulates chemotaxis in response to various stimuli. Catalyzes the demethylation of specific methylglutamate residues introduced into the chemoreceptors (methyl-accepting chemotaxis proteins or MCP) by CheR. Also mediates the irreversible deamidation of specific glutamine residues to glutamic acid. This chain is Protein-glutamate methylesterase/protein-glutamine glutaminase 1, found in Cupriavidus pinatubonensis (strain JMP 134 / LMG 1197) (Cupriavidus necator (strain JMP 134)).